We begin with the raw amino-acid sequence, 200 residues long: dITP/XTP pyrophosphatase (200 aa).

8 to 13 (TRNAGK) provides a ligand contact to substrate. Aspartate 72 acts as the Proton acceptor in catalysis. Aspartate 72 lines the Mg(2+) pocket. Residues serine 73, 155 to 158 (FGYD), lysine 178, and 183 to 184 (HR) each bind substrate.

It belongs to the HAM1 NTPase family. As to quaternary structure, homodimer. It depends on Mg(2+) as a cofactor.

It catalyses the reaction XTP + H2O = XMP + diphosphate + H(+). The catalysed reaction is dITP + H2O = dIMP + diphosphate + H(+). It carries out the reaction ITP + H2O = IMP + diphosphate + H(+). In terms of biological role, pyrophosphatase that catalyzes the hydrolysis of nucleoside triphosphates to their monophosphate derivatives, with a high preference for the non-canonical purine nucleotides XTP (xanthosine triphosphate), dITP (deoxyinosine triphosphate) and ITP. Seems to function as a house-cleaning enzyme that removes non-canonical purine nucleotides from the nucleotide pool, thus preventing their incorporation into DNA/RNA and avoiding chromosomal lesions. This chain is dITP/XTP pyrophosphatase, found in Streptomyces avermitilis (strain ATCC 31267 / DSM 46492 / JCM 5070 / NBRC 14893 / NCIMB 12804 / NRRL 8165 / MA-4680).